The sequence spans 676 residues: Beta-taxilin (676 aa).

2 disordered regions span residues 1-55 (MEND…DISE) and 71-131 (AASL…EQKL). Polar residues-rich tracts occupy residues 8–25 (EKQQQVTTSPTQDNQGQS) and 34–45 (QPLSPTNQTSAQ). Over residues 75-92 (VEKEGTTAETDKPEKEDV) the composition is skewed to basic and acidic residues. Residues 93 to 105 (GSMEDAECEDVNE) are compositionally biased toward acidic residues. The span at 106–131 (ESEKDKPAPGDASRAKEPSASKEQKL) shows a compositional bias: basic and acidic residues. Residues 157-461 (EEKLDLLFKK…LYRKIKQAQL (305 aa)) adopt a coiled-coil conformation. Residues 464-486 (EVNGNDILEEDDDANTNPSSSEQ) are disordered.

Belongs to the taxilin family. Specifically expressed in skeletal and cardiac muscle.

It localises to the cytoplasm. Functionally, promotes neurite-outgrowth. May be involved in intracellular vesicle traffic. This Gallus gallus (Chicken) protein is Beta-taxilin (TXLNB).